Consider the following 524-residue polypeptide: Lysine--tRNA ligase (524 aa).

The Mg(2+) site is built by glutamate 433 and glutamate 440.

Belongs to the class-II aminoacyl-tRNA synthetase family. In terms of assembly, homodimer. It depends on Mg(2+) as a cofactor.

The protein resides in the cytoplasm. The catalysed reaction is tRNA(Lys) + L-lysine + ATP = L-lysyl-tRNA(Lys) + AMP + diphosphate. The polypeptide is Lysine--tRNA ligase (Colwellia psychrerythraea (strain 34H / ATCC BAA-681) (Vibrio psychroerythus)).